We begin with the raw amino-acid sequence, 104 residues long: Protein Rev (104 aa).

S5 is subject to Phosphoserine; by host CK2. The tract at residues 18 to 26 (VIKILYQSN) is homomultimerization. Polar residues predominate over residues 25 to 34 (SNPYPNSKGT). 2 disordered regions span residues 25–48 (SNPY…WRAR) and 63–104 (CLGG…ATTE). A Nuclear localization signal and RNA-binding (RRE) motif is present at residues 34–50 (TRQARRNRRRRWRARQR). Residues 35-48 (RQARRNRRRRWRAR) are compositionally biased toward basic residues. Over residues 67–77 (PPEPVDLPLPP) the composition is skewed to pro residues. The Nuclear export signal and binding to XPO1 motif lies at 73 to 84 (LPLPPLDRLTLD). Over residues 91-104 (TPGTESQQGTATTE) the composition is skewed to polar residues.

The protein belongs to the HIV-1 REV protein family. In terms of assembly, homomultimer; when bound to the RRE. Multimeric assembly is essential for activity and may involve XPO1. Binds to human KPNB1, XPO1, TNPO1, RANBP5 and IPO7. Interacts with the viral Integrase. Interacts with human KHDRBS1. Interacts with human NAP1; this interaction decreases Rev multimerization and stimulates its activity. Interacts with human DEAD-box helicases DDX3 and DDX24; these interactions may serve for viral RNA export to the cytoplasm and packaging, respectively. Interacts with human PSIP1; this interaction may inhibit HIV-1 DNA integration by promoting dissociation of the Integrase-LEDGF/p75 complex. In terms of processing, asymmetrically arginine dimethylated at one site by host PRMT6. Methylation impairs the RNA-binding activity and export of viral RNA from the nucleus to the cytoplasm. Phosphorylated by protein kinase CK2. Presence of, and maybe binding to the N-terminus of the regulatory beta subunit of CK2 is necessary for CK2-mediated Rev's phosphorylation.

Its subcellular location is the host nucleus. It localises to the host nucleolus. The protein localises to the host cytoplasm. Escorts unspliced or incompletely spliced viral pre-mRNAs (late transcripts) out of the nucleus of infected cells. These pre-mRNAs carry a recognition sequence called Rev responsive element (RRE) located in the env gene, that is not present in fully spliced viral mRNAs (early transcripts). This function is essential since most viral proteins are translated from unspliced or partially spliced pre-mRNAs which cannot exit the nucleus by the pathway used by fully processed cellular mRNAs. Rev itself is translated from a fully spliced mRNA that readily exits the nucleus. Rev's nuclear localization signal (NLS) binds directly to KPNB1/Importin beta-1 without previous binding to KPNA1/Importin alpha-1. KPNB1 binds to the GDP bound form of RAN (Ran-GDP) and targets Rev to the nucleus. In the nucleus, the conversion from Ran-GDP to Ran-GTP dissociates Rev from KPNB1 and allows Rev's binding to the RRE in viral pre-mRNAs. Rev multimerization on the RRE via cooperative assembly exposes its nuclear export signal (NES) to the surface. Rev can then form a complex with XPO1/CRM1 and Ran-GTP, leading to nuclear export of the complex. Conversion from Ran-GTP to Ran-GDP mediates dissociation of the Rev/RRE/XPO1/RAN complex, so that Rev can return to the nucleus for a subsequent round of export. Beside KPNB1, also seems to interact with TNPO1/Transportin-1, RANBP5/IPO5 and IPO7/RANBP7 for nuclear import. The nucleoporin-like HRB/RIP is an essential cofactor that probably indirectly interacts with Rev to release HIV RNAs from the perinuclear region to the cytoplasm. In Human immunodeficiency virus type 1 group N (isolate YBF30) (HIV-1), this protein is Protein Rev.